The sequence spans 102 residues: Large ribosomal subunit protein uL24 (102 aa).

The protein belongs to the universal ribosomal protein uL24 family. In terms of assembly, part of the 50S ribosomal subunit.

Its function is as follows. One of two assembly initiator proteins, it binds directly to the 5'-end of the 23S rRNA, where it nucleates assembly of the 50S subunit. Functionally, one of the proteins that surrounds the polypeptide exit tunnel on the outside of the subunit. This chain is Large ribosomal subunit protein uL24, found in Burkholderia ambifaria (strain ATCC BAA-244 / DSM 16087 / CCUG 44356 / LMG 19182 / AMMD) (Burkholderia cepacia (strain AMMD)).